Reading from the N-terminus, the 742-residue chain is Glycine--tRNA ligase (742 aa).

Residues 73-129 form the WHEP-TRS domain; it reads KLAPLRAAVKEYGDLIRDLKAKGAPKIDIDKAVVELKARKRLLEDTEIALAPKEASF. Glu-309 is a binding site for glycine. Residues 341–343 and 352–353 each bind ATP; these read RNE and RV. Glycine is bound at residue Glu-360. Position 467–468 (467–468) interacts with ATP; that stretch reads EC. 586–588 is a binding site for glycine; it reads EPS. Arg-593 is a binding site for ATP.

Belongs to the class-II aminoacyl-tRNA synthetase family. Homodimer.

Its subcellular location is the cytoplasm. It localises to the cell projection. It is found in the axon. The protein resides in the secreted. The protein localises to the extracellular exosome. The enzyme catalyses tRNA(Gly) + glycine + ATP = glycyl-tRNA(Gly) + AMP + diphosphate. It catalyses the reaction 2 ATP + H(+) = P(1),P(4)-bis(5'-adenosyl) tetraphosphate + diphosphate. Its function is as follows. Catalyzes the ATP-dependent ligation of glycine to the 3'-end of its cognate tRNA, via the formation of an aminoacyl-adenylate intermediate (Gly-AMP). Also produces diadenosine tetraphosphate (Ap4A), a universal pleiotropic signaling molecule needed for cell regulation pathways, by direct condensation of 2 ATPs. Thereby, may play a special role in Ap4A homeostasis. This is Glycine--tRNA ligase from Caenorhabditis elegans.